The sequence spans 676 residues: Envelope glycoprotein (676 aa).

Residues 1-32 form the signal peptide; the sequence is MGVTGILQLPRDRFKRTSFFLWVIILFQRTFS. Over 33-650 the chain is Extracellular; that stretch reads IPLGVIHNST…NDNWWTGWRQ (618 aa). N-linked (GlcNAc...) asparagine; by host glycosylation occurs at Asn40. Intrachain disulfides connect Cys53–Cys609, Cys108–Cys135, Cys121–Cys147, Cys511–Cys556, and Cys601–Cys608. Positions 54–201 are receptor-binding; it reads RDKLSSTNQL…DFFSSHPLRE (148 aa). N-linked (GlcNAc...) asparagine; by host glycosylation is found at Asn204, Asn228, Asn238, Asn257, Asn268, Asn296, Asn317, Asn333, Asn346, Asn386, and Asn413. The mucin-like region stretch occupies residues 305-485; it reads ELSFTVVSNG…SGKLGLITNT (181 aa). Polar residues predominate over residues 315–335; sequence AKNISGQSPARTSSDPGTNTT. Residues 315-337 form a disordered region; the sequence is AKNISGQSPARTSSDPGTNTTTE. Residues 373-391 are compositionally biased toward polar residues; it reads TSPQSLTTKPGPDNSTHNT. Disordered regions lie at residues 373 to 392 and 402 to 479; these read TSPQSLTTKPGPDNSTHNTP and TQVE…SGKL. The segment covering 414 to 432 has biased composition (low complexity); the sequence is DSTASDTPSATTAAGPPKA. Positions 433-464 are enriched in polar residues; it reads ENTNTSKSTDFLDPATTTSPQNHSETAGNNNT. N-linked (GlcNAc...) asparagine; by host glycosylation is found at Asn436, Asn454, and Asn462. Residues 524–539 form a fusion peptide region; sequence GAAIGLAWIPYFGPAA. The stretch at 554-595 forms a coiled coil; sequence LICGLRQLANETTQALQLFLRATTELRTFSILNRKAIDFLLQ. Asn563 is a glycosylation site (N-linked (GlcNAc...) asparagine; by host). Positions 615-634 form a coiled coil; sequence WTKNITDKIDQIIHDFVDKT. Asn618 carries N-linked (GlcNAc...) asparagine; by host glycosylation. The chain crosses the membrane as a helical span at residues 651–671; it reads WIPAGIGVTGVIIAVIALFCI. S-palmitoyl cysteine; by host attachment occurs at residues Cys670 and Cys672. Residues 672 to 676 are Cytoplasmic-facing; it reads CKFVF.

Belongs to the filoviruses glycoprotein family. Homotrimer; each monomer consists of a GP1 and a GP2 subunit linked by disulfide bonds. The resulting peplomers (GP1,2) protrude from the virus surface as spikes. Interacts with host integrin alpha-V/ITGAV. Interacts with host CLEC10A. Binds also to host CD209 and CLEC4M/DC-SIGN(R). Interacts with host FOLR1. Interacts with BST2; this interaction inhibits the antiviral effect of BST2 and this allows viral release from infected cells. Interacts with host FCN1; this interaction enhances viral entry. Interacts with host TLR4; this interaction induces cell death in T-lymphocytes or proinflammatory cytokines and SOCS1 production in monocytes. As to quaternary structure, interacts with host entry receptor NPC1. In terms of assembly, GP1 and GP2delta are part of GP1,2delta soluble complexes released by ectodomain shedding. In terms of processing, the signal peptide region modulates GP's high mannose glycosylation, thereby determining the efficiency of the interactions with DC-SIGN(R). N-glycosylated. Post-translationally, O-glycosylated in the mucin-like region. In terms of processing, palmitoylation of GP2 is not required for its function. Specific enzymatic cleavages in vivo yield mature proteins. The precursor is processed into GP1 and GP2 by host cell furin in the trans Golgi, and maybe by other host proteases, to yield the mature GP1 and GP2 proteins. The cleavage site corresponds to the furin optimal cleavage sequence [KR]-X-[KR]-R. This cleavage does not seem to be required for function. After the internalization of the virus into cell endosomes, GP1 C-terminus is removed by the endosomal proteases cathepsin B, cathepsin L, or both, leaving a 19-kDa N-terminal fragment which is further digested by cathepsin B. Proteolytic processing of GP1,2 by host ADAM17 can remove the transmembrane anchor of GP2 and leads to shedding of complexes consisting in GP1 and truncated GP2 (GP1,2delta).

The protein localises to the virion membrane. The protein resides in the host cell membrane. It localises to the secreted. In terms of biological role, trimeric GP1,2 complexes form the virion surface spikes and mediate the viral entry processes, with GP1 acting as the receptor-binding subunit and GP2 as the membrane fusion subunit. At later times of infection, down-regulates the expression of various host cell surface molecules that are essential for immune surveillance and cell adhesion. Down-modulates several integrins including ITGA1, ITGA2, ITGA3, ITGA4, ITGA5, ITGA6, ITGAV and ITGB1. This decrease in cell adhesion molecules may lead to cell detachment, contributing to the disruption of blood vessel integrity and hemorrhages developed during infection (cytotoxicity). Interacts with host TLR4 and thereby stimulates the differentiation and activation of monocytes leading to bystander death of T-lymphocytes. Down-regulates as well the function of host natural killer cells. Counteracts the antiviral effect of host BST2/tetherin that restricts release of progeny virions from infected cells. However, cooperates with VP40 and host BST2 to activate canonical NF-kappa-B pathway in a manner dependent on neddylation. Functions as a decoy for anti-GP1,2 antibodies thereby contributing to viral immune evasion. Interacts and activates host macrophages and dendritic cells inducing up-regulation of cytokine transcription. This effect is mediated throught activation of host TLR4. Its function is as follows. Responsible for binding to the receptor(s) on target cells. Interacts with CD209/DC-SIGN and CLEC4M/DC-SIGNR which act as cofactors for virus entry into dendritic cells (DCs) and endothelial cells. Binding to the macrophage specific lectin CLEC10A also seems to enhance virus infectivity. Interaction with FOLR1/folate receptor alpha may be a cofactor for virus entry in some cell types, although results are contradictory. Members of the Tyro3 receptor tyrosine kinase family also seem to be cell entry factors in filovirus infection. Once attached, the virions are internalized through clathrin-dependent endocytosis and/or macropinocytosis. After internalization of the virus into the endosomes of the host cell, proteolysis of GP1 by two cysteine proteases, CTSB/cathepsin B and CTSL/cathepsin L removes the glycan cap and allows GP1 binding to the host entry receptor NPC1. NPC1-binding, Ca(2+) and acidic pH induce a conformational change of GP2, which unmasks its fusion peptide and permit membranes fusion. Functionally, acts as a class I viral fusion protein. Under the current model, the protein has at least 3 conformational states: pre-fusion native state, pre-hairpin intermediate state, and post-fusion hairpin state. During viral and target cell membrane fusion, the coiled coil regions (heptad repeats) assume a trimer-of-hairpins structure, positioning the fusion peptide in close proximity to the C-terminal region of the ectodomain. The formation of this structure appears to drive apposition and subsequent fusion of viral and target cell membranes. Responsible for penetration of the virus into the cell cytoplasm by mediating the fusion of the membrane of the endocytosed virus particle with the endosomal membrane. Low pH in endosomes induces an irreversible conformational change in GP2, releasing the fusion hydrophobic peptide. The protein is Envelope glycoprotein (GP) of Epomops franqueti (Franquet's epauletted fruit bat).